Here is a 93-residue protein sequence, read N- to C-terminus: Alpha-defensin 2 (93 aa).

Positions 1–19 (MKPLVLLSALVLLSFQVQA) are cleaved as a signal peptide. The propeptide occupies 20–58 (DPIQNTDEETKTEEQSGEEDQAVSVSFGDREGASLQEES). A disordered region spans residues 23–49 (QNTDEETKTEEQSGEEDQAVSVSFGDR). 3 disulfides stabilise this stretch: Cys64/Cys92, Cys66/Cys81, and Cys71/Cys91.

It belongs to the alpha-defensin family. In terms of tissue distribution, paneth cells of the small bowel.

It is found in the secreted. Has broad-spectrum antimicrobial properties. Has antibacterial activity against the Gram-positive bacterium L.monocytogenes EGD and the Gram-negative bacteria E.coli ML-35p and avirulent S.typhimurium 7953, but not against the mouse-virulent S.typhimurium 14028S. Probably contributes to the antimicrobial barrier function of the small bowel mucosa. The sequence is that of Alpha-defensin 2 (Defa2) from Mus musculus (Mouse).